Here is a 260-residue protein sequence, read N- to C-terminus: Transcriptional activator protein AsaR (260 aa).

One can recognise an HTH luxR-type domain in the interval 176 to 241 (EDDPQEALTD…QAIAKGVSSG (66 aa)). The segment at residues 200–219 (SGEIACILGITERTVNYHLN) is a DNA-binding region (H-T-H motif).

This sequence belongs to the autoinducer-regulated transcriptional regulatory protein family.

Functionally, functions as a BHL-responsive transcriptional regulator. The polypeptide is Transcriptional activator protein AsaR (Aeromonas salmonicida).